We begin with the raw amino-acid sequence, 673 residues long: UvrABC system protein B (673 aa).

The 158-residue stretch at 26-183 (EGLEDGLAHQ…RRLAELQYTR (158 aa)) folds into the Helicase ATP-binding domain. 39-46 (GVTGSGKT) lines the ATP pocket. The short motif at 92–115 (YYDYYQPEAYVPSSDTFIEKDASV) is the Beta-hairpin element. The region spanning 431-597 (QVDDLLSEIR…GLNKKVVDIL (167 aa)) is the Helicase C-terminal domain. The 36-residue stretch at 633-668 (QQKIHELEGQMMQHAQNLEFEEAAQIRDQLHQLREL) folds into the UVR domain.

This sequence belongs to the UvrB family. In terms of assembly, forms a heterotetramer with UvrA during the search for lesions. Interacts with UvrC in an incision complex.

Its subcellular location is the cytoplasm. In terms of biological role, the UvrABC repair system catalyzes the recognition and processing of DNA lesions. A damage recognition complex composed of 2 UvrA and 2 UvrB subunits scans DNA for abnormalities. Upon binding of the UvrA(2)B(2) complex to a putative damaged site, the DNA wraps around one UvrB monomer. DNA wrap is dependent on ATP binding by UvrB and probably causes local melting of the DNA helix, facilitating insertion of UvrB beta-hairpin between the DNA strands. Then UvrB probes one DNA strand for the presence of a lesion. If a lesion is found the UvrA subunits dissociate and the UvrB-DNA preincision complex is formed. This complex is subsequently bound by UvrC and the second UvrB is released. If no lesion is found, the DNA wraps around the other UvrB subunit that will check the other stand for damage. The protein is UvrABC system protein B of Salmonella heidelberg (strain SL476).